The primary structure comprises 221 residues: GTP cyclohydrolase-2 (221 aa).

Residue 63-67 (RLHSE) coordinates GTP. Cysteine 68, cysteine 79, and cysteine 81 together coordinate Zn(2+). GTP-binding positions include glutamine 84, 107-109 (EGR), and threonine 129. The Proton acceptor role is filled by aspartate 141. Arginine 143 (nucleophile) is an active-site residue. Residues serine 164 and lysine 169 each coordinate GTP.

It belongs to the GTP cyclohydrolase II family. Requires Zn(2+) as cofactor.

It catalyses the reaction GTP + 4 H2O = 2,5-diamino-6-hydroxy-4-(5-phosphoribosylamino)-pyrimidine + formate + 2 phosphate + 3 H(+). It functions in the pathway cofactor biosynthesis; riboflavin biosynthesis; 5-amino-6-(D-ribitylamino)uracil from GTP: step 1/4. Its function is as follows. Catalyzes the conversion of GTP to 2,5-diamino-6-ribosylamino-4(3H)-pyrimidinone 5'-phosphate (DARP), formate and pyrophosphate. The chain is GTP cyclohydrolase-2 from Streptomyces coelicolor (strain ATCC BAA-471 / A3(2) / M145).